Reading from the N-terminus, the 184-residue chain is MPIMPDTWIREMATTKGMIEPFTEAQKREGVISYGLSSYGYDARVADEFKIFTNVDNAIVDPKQFDATSFVDRKTDVCIIPANSFALARTVEYFRIPRDVLVICLGKSTYARCGLIVNVTPLEPEWEGHVTLEISNTTPLPAKVYANEGLCQFLFLKGEGTCEVSYADRAGKYMRQRGVTLPRL.

Residues 107-112 (KSTYAR), 131-133 (TLE), glutamine 152, tyrosine 166, and glutamine 176 each bind dCTP. Glutamate 133 (proton donor/acceptor) is an active-site residue.

Belongs to the dCTP deaminase family. As to quaternary structure, homotrimer.

The enzyme catalyses dCTP + H2O + H(+) = dUTP + NH4(+). The protein operates within pyrimidine metabolism; dUMP biosynthesis; dUMP from dCTP (dUTP route): step 1/2. In terms of biological role, catalyzes the deamination of dCTP to dUTP. The protein is dCTP deaminase of Rhodospirillum centenum (strain ATCC 51521 / SW).